The chain runs to 221 residues: Iron-sulfur cluster repair protein YtfE (221 aa).

It belongs to the RIC family. YtfE subfamily. As to quaternary structure, homodimer.

It is found in the cytoplasm. Di-iron-containing protein involved in the repair of iron-sulfur clusters damaged by oxidative and nitrosative stress conditions. The polypeptide is Iron-sulfur cluster repair protein YtfE (Edwardsiella ictaluri (strain 93-146)).